The primary structure comprises 581 residues: Arginine--tRNA ligase (581 aa).

The 'HIGH' region motif lies at 126–136; sequence PNLAKEMHVGH.

The protein belongs to the class-I aminoacyl-tRNA synthetase family. Monomer.

The protein resides in the cytoplasm. The enzyme catalyses tRNA(Arg) + L-arginine + ATP = L-arginyl-tRNA(Arg) + AMP + diphosphate. This chain is Arginine--tRNA ligase, found in Shewanella halifaxensis (strain HAW-EB4).